The sequence spans 249 residues: Transcription initiation factor TFIID subunit 9B (249 aa).

Methionine 1 carries the N-acetylmethionine modification. Phosphoserine is present on serine 147. Residues 148-171 (AVSSRPTTPPVAPPQAVSGPNKAA) form a disordered region. Threonine 172 is modified (phosphothreonine). A Phosphoserine modification is found at serine 175. The span at 224–234 (VSSQNTATDSN) shows a compositional bias: polar residues. The interval 224-249 (VSSQNTATDSNPLKRKHDDDDDNDTM) is disordered.

It belongs to the TAF9 family. As to quaternary structure, binds TAF5 and TAF6. Component of TFIID and the TATA-binding protein-free TAF complex (TFTC). TFIID is composed of TATA binding protein (TBP) and a number of TBP-associated factors (TAFs). Binds N-terminal domain of p53/TP53 which is essential for transcription.

It localises to the nucleus. Its function is as follows. Essential for cell viability. TAF9 and TAF9B are involved in transcriptional activation as well as repression of distinct but overlapping sets of genes. May have a role in gene regulation associated with apoptosis. TAFs are components of the transcription factor IID (TFIID) complex, the TBP-free TAFII complex (TFTC), the PCAF histone acetylase complex and the STAGA transcription coactivator-HAT complex. TFIID or TFTC are essential for the regulation of RNA polymerase II-mediated transcription. The chain is Transcription initiation factor TFIID subunit 9B (Taf9b) from Mus musculus (Mouse).